Consider the following 2373-residue polypeptide: Highly reducing polyketide synthase (2373 aa).

Positions glutamine 19 to glutamate 446 constitute a Ketosynthase family 3 (KS3) domain. Active-site for beta-ketoacyl synthase activity residues include cysteine 192, histidine 329, and histidine 369. Positions isoleucine 560–alanine 874 are malonyl-CoA:ACP transacylase (MAT) domain. Residue serine 652 is the For malonyltransferase activity of the active site. The N-terminal hotdog fold stretch occupies residues histidine 942–proline 1078. The dehydratase (DH) domain stretch occupies residues histidine 942 to aspartate 1241. In terms of domain architecture, PKS/mFAS DH spans histidine 942–valine 1246. Residue histidine 974 is the Proton acceptor; for dehydratase activity of the active site. A C-terminal hotdog fold region spans residues serine 1090 to valine 1246. The active-site Proton donor; for dehydratase activity is the aspartate 1154. The enoyl reductase (ER) domain stretch occupies residues glycine 1669–isoleucine 1985. Positions glycine 2010 to aspartate 2187 are ketoreductase (KR) domain. Positions alanine 2294–leucine 2370 constitute a Carrier domain. O-(pantetheine 4'-phosphoryl)serine is present on serine 2330.

The cofactor is pantetheine 4'-phosphate.

The protein operates within mycotoxin biosynthesis. Its function is as follows. Highly reducing polyketide synthase; part of the gene cluster that mediates the biosynthesis of brefeldin A (BFA), a protein transport inhibitor that shows antiviral, antifungal, and antitumor properties. The proposed biosynthesis of BFA involves formation of an acyclic polyketide chain that is differentially tailored throughout the backbone. The highly reducing polyketide synthase Bref-PKS is proposed to synthesize the precisely reduced octaketide precursor, which could then be directly offloaded by the thiohydrolase enzyme Bref-TH followed by a cytochrome P450 monooxygenase-mediated formation of the cyclopentane ring and macrocyclization to afford 7-deoxy BFA. Alternatively, the first ring annulation can also occur on the ACP-tethered intermediate before the thiohydrolase release and lactonization. The C7-hydroxylation by another cytochrome P450 monooxygenase is believed to be the final step in the process to obtain the final structure of BFA. In addition to the HRPKS Bref-PKS and the thiohydrolase Bref-TH, the brefeldin A biosynthesis cluster contains 4 cytochrome p450 monooxygenases (called orf3 to orf6), as well a the probable cluster-specific transcription regulator orf8. The sequence is that of Highly reducing polyketide synthase from Eupenicillium brefeldianum (Penicillium brefeldianum).